A 361-amino-acid polypeptide reads, in one-letter code: Dihydroorotate dehydrogenase (quinone) (361 aa).

Residues 67–71 (AGLDK) and threonine 91 contribute to the FMN site. Lysine 71 contributes to the substrate binding site. 116-120 (NRMGF) serves as a coordination point for substrate. FMN-binding residues include asparagine 145 and asparagine 178. Asparagine 178 is a binding site for substrate. Residue serine 181 is the Nucleophile of the active site. Residue asparagine 183 coordinates substrate. Residues lysine 223 and glycine 251 each coordinate FMN. Position 252 to 253 (252 to 253 (NT)) interacts with substrate. FMN-binding positions include glycine 273, glycine 302, and 323-324 (YT).

Belongs to the dihydroorotate dehydrogenase family. Type 2 subfamily. Monomer. Requires FMN as cofactor.

Its subcellular location is the cell membrane. It carries out the reaction (S)-dihydroorotate + a quinone = orotate + a quinol. The protein operates within pyrimidine metabolism; UMP biosynthesis via de novo pathway; orotate from (S)-dihydroorotate (quinone route): step 1/1. Functionally, catalyzes the conversion of dihydroorotate to orotate with quinone as electron acceptor. In Deinococcus geothermalis (strain DSM 11300 / CIP 105573 / AG-3a), this protein is Dihydroorotate dehydrogenase (quinone).